A 198-amino-acid chain; its full sequence is Alpha1-proteinase inhibitor-degradation deficient protein 37 (198 aa).

Ser79 carries the phosphoserine modification.

It localises to the cytoplasm. Involved in ER-associated protein degradation (ERAD). This chain is Alpha1-proteinase inhibitor-degradation deficient protein 37 (ADD37), found in Saccharomyces cerevisiae (strain ATCC 204508 / S288c) (Baker's yeast).